The chain runs to 528 residues: Drimenol cyclase drtB (528 aa).

This sequence belongs to the HAD-like hydrolase superfamily.

It catalyses the reaction (2E,6E)-farnesyl diphosphate + H2O = (5S,9S,10S)-drim-7-en-11-ol + diphosphate. The protein operates within secondary metabolite biosynthesis; terpenoid biosynthesis. Functionally, drimenol cyclase; part of the gene cluster that mediates the biosynthesis of various drimane-type sesquiterpene esters, compounds that exhibit diverse biological activities and are widely present in eukaryotes. The pathway begins with the synthesis of the backbone drimenol by the terpene cyclase drtB using farnesyl pyrophosphate (FPP) as substrate. The cytochrome P450 monooxygenase drtD is then responsible for the hydroxylations at C-6, C-9 and C-12, as well as the oxidation of hydroxyl groups at C-6 and C-11 to a ketone and an aldehyde, respectively. Then, the biosynthesis can go in two directions, either the hydroxylated drimenol is further hydroxylated at C-2 and C-3 by an enzyme(s) not associated with the drt cluster, or the FAD-binding oxidoreductase drtC further oxidizes C-11 or C-12 to form the butyrolactone ring. DrtB, drtD and drtC are solely responsible for the formation of the different drimane structures observed during drimane sesquiterpenes biosynthesis. The polyketide synthase drtA synthesizes different lengths (C6 and C8) of PKS chains, which are then oxidized to varying degrees by the short-chain dehydrogenase drtF. Finally, these PKS chains are transferred onto drimane sesquiterpenes by the acyltransferase drtE, forming the sesquiterpene esters. In addition to the different fatty acyl-CoA chains produced by drtA, drtE is also able to use cinnamoyl-CoA as a substrate. In Aspergillus calidoustus, this protein is Drimenol cyclase drtB.